Reading from the N-terminus, the 156-residue chain is Small ribosomal subunit protein uS7 (156 aa).

Belongs to the universal ribosomal protein uS7 family. In terms of assembly, part of the 30S ribosomal subunit. Contacts proteins S9 and S11.

Functionally, one of the primary rRNA binding proteins, it binds directly to 16S rRNA where it nucleates assembly of the head domain of the 30S subunit. Is located at the subunit interface close to the decoding center, probably blocks exit of the E-site tRNA. This Acidobacterium capsulatum (strain ATCC 51196 / DSM 11244 / BCRC 80197 / JCM 7670 / NBRC 15755 / NCIMB 13165 / 161) protein is Small ribosomal subunit protein uS7.